The following is a 543-amino-acid chain: CTP synthase (543 aa).

An amidoligase domain region spans residues 1–265 (MTRFIFVTGG…DQIVLDKFGL (265 aa)). S13 contributes to the CTP binding site. S13 contributes to the UTP binding site. Residues 14–19 (SLGKGI) and D71 each bind ATP. Positions 71 and 139 each coordinate Mg(2+). CTP-binding positions include 146 to 148 (DIE), 186 to 191 (KTKPTQ), and K222. Residues 186–191 (KTKPTQ) and K222 each bind UTP. Positions 290–541 (TIAMVGKYMD…IQAAVEQNER (252 aa)) constitute a Glutamine amidotransferase type-1 domain. G351 contributes to the L-glutamine binding site. Catalysis depends on C378, which acts as the Nucleophile; for glutamine hydrolysis. L-glutamine contacts are provided by residues 379–382 (LGMQ), E402, and R469. Catalysis depends on residues H514 and E516.

The protein belongs to the CTP synthase family. As to quaternary structure, homotetramer.

The catalysed reaction is UTP + L-glutamine + ATP + H2O = CTP + L-glutamate + ADP + phosphate + 2 H(+). The enzyme catalyses L-glutamine + H2O = L-glutamate + NH4(+). It catalyses the reaction UTP + NH4(+) + ATP = CTP + ADP + phosphate + 2 H(+). It functions in the pathway pyrimidine metabolism; CTP biosynthesis via de novo pathway; CTP from UDP: step 2/2. Its activity is regulated as follows. Allosterically activated by GTP, when glutamine is the substrate; GTP has no effect on the reaction when ammonia is the substrate. The allosteric effector GTP functions by stabilizing the protein conformation that binds the tetrahedral intermediate(s) formed during glutamine hydrolysis. Inhibited by the product CTP, via allosteric rather than competitive inhibition. Its function is as follows. Catalyzes the ATP-dependent amination of UTP to CTP with either L-glutamine or ammonia as the source of nitrogen. Regulates intracellular CTP levels through interactions with the four ribonucleotide triphosphates. This Saccharophagus degradans (strain 2-40 / ATCC 43961 / DSM 17024) protein is CTP synthase.